The chain runs to 394 residues: Phenylalanine 4-monooxygenase, chloroplastic (394 aa).

The transit peptide at 1 to 79 (MAMEVGYLRH…LNQIQAVSTA (79 aa)) directs the protein to the chloroplast. Residues 75–97 (AVSTAEKEREADKTSTPPIPSSI) are disordered. Residues His-252, His-257, and Glu-297 each contribute to the Fe cation site.

It belongs to the biopterin-dependent aromatic amino acid hydroxylase family. As to quaternary structure, forms monomers. Fe(2+) serves as cofactor.

The protein resides in the plastid. The protein localises to the chloroplast. It catalyses the reaction (6R)-L-erythro-5,6,7,8-tetrahydrobiopterin + L-phenylalanine + O2 = (4aS,6R)-4a-hydroxy-L-erythro-5,6,7,8-tetrahydrobiopterin + L-tyrosine. Catalyzes the hydroxylation of L-phenylalanine to L-tyrosine. Does not seem to be tetrahydropterin-dependent and shows preference for 10-formyltetrahydrofolate as cosubstrate and electron donor. The polypeptide is Phenylalanine 4-monooxygenase, chloroplastic (Physcomitrium patens (Spreading-leaved earth moss)).